The chain runs to 209 residues: Thiamine-phosphate synthase (209 aa).

Residues 36–40 and Asn68 each bind 4-amino-2-methyl-5-(diphosphooxymethyl)pyrimidine; that span reads QYRDK. Residues Asp69 and Asp87 each coordinate Mg(2+). Thr106 contributes to the 4-amino-2-methyl-5-(diphosphooxymethyl)pyrimidine binding site. 133 to 135 is a 2-[(2R,5Z)-2-carboxy-4-methylthiazol-5(2H)-ylidene]ethyl phosphate binding site; that stretch reads SST. Lys136 provides a ligand contact to 4-amino-2-methyl-5-(diphosphooxymethyl)pyrimidine. 2-[(2R,5Z)-2-carboxy-4-methylthiazol-5(2H)-ylidene]ethyl phosphate is bound at residue Gly163.

It belongs to the thiamine-phosphate synthase family. It depends on Mg(2+) as a cofactor.

The catalysed reaction is 2-[(2R,5Z)-2-carboxy-4-methylthiazol-5(2H)-ylidene]ethyl phosphate + 4-amino-2-methyl-5-(diphosphooxymethyl)pyrimidine + 2 H(+) = thiamine phosphate + CO2 + diphosphate. It carries out the reaction 2-(2-carboxy-4-methylthiazol-5-yl)ethyl phosphate + 4-amino-2-methyl-5-(diphosphooxymethyl)pyrimidine + 2 H(+) = thiamine phosphate + CO2 + diphosphate. It catalyses the reaction 4-methyl-5-(2-phosphooxyethyl)-thiazole + 4-amino-2-methyl-5-(diphosphooxymethyl)pyrimidine + H(+) = thiamine phosphate + diphosphate. Its pathway is cofactor biosynthesis; thiamine diphosphate biosynthesis; thiamine phosphate from 4-amino-2-methyl-5-diphosphomethylpyrimidine and 4-methyl-5-(2-phosphoethyl)-thiazole: step 1/1. Condenses 4-methyl-5-(beta-hydroxyethyl)thiazole monophosphate (THZ-P) and 2-methyl-4-amino-5-hydroxymethyl pyrimidine pyrophosphate (HMP-PP) to form thiamine monophosphate (TMP). The polypeptide is Thiamine-phosphate synthase (Pseudomonas paraeruginosa (strain DSM 24068 / PA7) (Pseudomonas aeruginosa (strain PA7))).